We begin with the raw amino-acid sequence, 266 residues long: Calpain small subunit 1 (266 aa).

Met-1 bears the N-acetylmethionine mark. Residue Ser-6 is modified to Phosphoserine. Positions 94–128 (EEVRQFRRLFAQLAGDDMEVSATELMNILNKVVTR) constitute an EF-hand 1; atypical domain. Ala-107, Asp-110, Glu-112, Glu-117, Asp-135, Asp-150, Asp-152, Thr-154, Lys-156, and Glu-161 together coordinate Ca(2+). EF-hand domains lie at 137 to 170 (FGLD…NNIK), 167 to 202 (NNIK…AGFH), 203 to 231 (LNEH…ISCL), and 232 to 266 (VRLD…TMYS). Lys-177 is modified (N6-acetyllysine). Ca(2+) contacts are provided by Asp-180, Asp-182, Ser-184, Thr-186, Glu-191, and Asp-223.

Homodimer or heterodimer of a large (catalytic) and a small (regulatory) subunit. In presence of calcium, the heterodimer dissociates. Post-translationally, the N-terminus is blocked.

The protein resides in the cytoplasm. The protein localises to the cell membrane. Functionally, regulatory subunit of the calcium-regulated non-lysosomal thiol-protease which catalyzes limited proteolysis of substrates involved in cytoskeletal remodeling and signal transduction. Essential for embryonic development. This is Calpain small subunit 1 (CAPNS1) from Oryctolagus cuniculus (Rabbit).